Reading from the N-terminus, the 39-residue chain is Pro-opiomelanocortin (39 aa).

Serine 1 carries the N-acetylserine modification. The residue at position 13 (valine 13) is a Valine amide. Phosphoserine is present on serine 31.

This sequence belongs to the POMC family. Expressed in the pituitary gland.

It localises to the secreted. Its function is as follows. Precursor protein for pituitary hormones that regulate stress and environmental adaptation. Stimulates the adrenal glands to release cortisol. In terms of biological role, anorexigenic peptide. Increases the pigmentation of skin by increasing melanin production in melanocytes. The polypeptide is Pro-opiomelanocortin (POMC) (Oryctolagus cuniculus (Rabbit)).